A 343-amino-acid chain; its full sequence is Probable dual-specificity RNA methyltransferase RlmN (343 aa).

Glu-91 acts as the Proton acceptor in catalysis. In terms of domain architecture, Radical SAM core spans 97–326; it reads HPGRITACIS…AEIRQEKGSD (230 aa). A disulfide bridge links Cys-104 with Cys-331. [4Fe-4S] cluster-binding residues include Cys-111, Cys-115, and Cys-118. S-adenosyl-L-methionine-binding positions include 158–159, Ser-190, 213–215, and Asn-289; these read GE and SLH. Cys-331 acts as the S-methylcysteine intermediate in catalysis.

The protein belongs to the radical SAM superfamily. RlmN family. [4Fe-4S] cluster is required as a cofactor.

Its subcellular location is the cytoplasm. The enzyme catalyses adenosine(2503) in 23S rRNA + 2 reduced [2Fe-2S]-[ferredoxin] + 2 S-adenosyl-L-methionine = 2-methyladenosine(2503) in 23S rRNA + 5'-deoxyadenosine + L-methionine + 2 oxidized [2Fe-2S]-[ferredoxin] + S-adenosyl-L-homocysteine. The catalysed reaction is adenosine(37) in tRNA + 2 reduced [2Fe-2S]-[ferredoxin] + 2 S-adenosyl-L-methionine = 2-methyladenosine(37) in tRNA + 5'-deoxyadenosine + L-methionine + 2 oxidized [2Fe-2S]-[ferredoxin] + S-adenosyl-L-homocysteine. Its function is as follows. Specifically methylates position 2 of adenine 2503 in 23S rRNA and position 2 of adenine 37 in tRNAs. This Thermotoga neapolitana (strain ATCC 49049 / DSM 4359 / NBRC 107923 / NS-E) protein is Probable dual-specificity RNA methyltransferase RlmN.